The primary structure comprises 72 residues: DNA-directed RNA polymerase subunit omega (72 aa).

It belongs to the RNA polymerase subunit omega family. As to quaternary structure, the RNAP catalytic core consists of 2 alpha, 1 beta, 1 beta' and 1 omega subunit. When a sigma factor is associated with the core the holoenzyme is formed, which can initiate transcription.

The enzyme catalyses RNA(n) + a ribonucleoside 5'-triphosphate = RNA(n+1) + diphosphate. In terms of biological role, promotes RNA polymerase assembly. Latches the N- and C-terminal regions of the beta' subunit thereby facilitating its interaction with the beta and alpha subunits. The protein is DNA-directed RNA polymerase subunit omega of Francisella philomiragia subsp. philomiragia (strain ATCC 25017 / CCUG 19701 / FSC 153 / O#319-036).